Here is a 57-residue protein sequence, read N- to C-terminus: COP9 signalosome complex subunit 9 (57 aa).

A Phosphothreonine modification is found at threonine 26.

This sequence belongs to the CSN9 family. Component of the CSN complex, composed of COPS1/GPS1, COPS2, COPS3, COPS4, COPS5, COPS6, COPS7 (COPS7A or COPS7B), COPS8 and COPS9. In the complex, it interacts directly with COPS3, COPS5 and COPS6.

Its subcellular location is the nucleus. The protein localises to the cytoplasm. It localises to the nucleoplasm. Functionally, component of the COP9 signalosome complex (CSN), a complex involved in various cellular and developmental processes. The CSN complex is an essential regulator of the ubiquitin (Ubl) conjugation pathway by mediating the deneddylation of the cullin subunits of SCF-type E3 ligase complexes, leading to decrease the Ubl ligase activity of SCF-type complexes such as SCF, CSA or DDB2. The complex is also involved in phosphorylation of p53/TP53, c-jun/JUN, IkappaBalpha/NFKBIA, ITPK1 and IRF8/ICSBP, possibly via its association with CK2 and PKD kinases. CSN-dependent phosphorylation of TP53 and JUN promotes and protects degradation by the Ubl system, respectively. Plays a role in cell proliferation. This Bos taurus (Bovine) protein is COP9 signalosome complex subunit 9.